Reading from the N-terminus, the 192-residue chain is NF-kappa-B inhibitor-interacting Ras-like protein 1 (192 aa).

Residue 11-18 (GLLSVGKT) coordinates GTP. Residues 35-43 (DCETMEDVY) carry the Effector region motif. An interactions with NFKBIA and NFKBIB region spans residues 58–93 (HLYDTRGLQEGVELPKHYFSFADGFVLVYSVNNLES). Residues 61–65 (DTRGL) and 120–123 (NKID) each bind GTP. Residues 168-192 (LSQPQSKSSFPLPGRKNKGNSSSEN) are disordered.

This sequence belongs to the small GTPase superfamily. Ras family. KappaB-Ras subfamily. As to quaternary structure, interacts with both NF-kappa-B inhibitor alpha (NFKBIA) and beta (NFKBIB) in vitro. However, it probably only interacts with NFKBIB in vivo. Forms a complex with NFKBIB and NF-kappa-B heterodimer (p50/NFKB1 and p65/RELA). Also interacts with c-Rel (REL).

It is found in the cytoplasm. Functionally, atypical Ras-like protein that acts as a potent regulator of NF-kappa-B activity by preventing the degradation of NF-kappa-B inhibitor beta (NFKBIB) by most signals, explaining why NFKBIB is more resistant to degradation. May act by blocking phosphorylation of NFKBIB and mediating cytoplasmic retention of p65/RELA NF-kappa-B subunit. It is unclear whether it acts as a GTPase. Both GTP- and GDP-bound forms block phosphorylation of NFKBIB. The chain is NF-kappa-B inhibitor-interacting Ras-like protein 1 (NKIRAS1) from Macaca fascicularis (Crab-eating macaque).